Reading from the N-terminus, the 291-residue chain is MSGEALQRWWHWAQGIIPAPERESGLRELKQFLRAFTGLSPLEITLRRFPPQIHLKLPLTELQERWQRRWQERVPLQYLIGVAHWHDLELVVTPSVLIPRPETEELLAVVAATVPPWQQQGHWLDLGTGSGAIAIGLARLFPAALIHAVDCSSEALEVAQVNIQKYALGDRVRCYVGNWFDPIVPLQGQVQGIVSNPPYIPTSVVATLQPEVQYHEPLLALDGGTDGLQAIRQILETAPEYLQPQGWLFIELMATQGKAVAALAMATQAYERVEILRDLSGHDRFLLAQTP.

S-adenosyl-L-methionine contacts are provided by residues 127–131 (GTGSG), Asp-150, Trp-179, and Asn-196. Residue 196–199 (NPPY) coordinates substrate.

It belongs to the protein N5-glutamine methyltransferase family. PrmC subfamily.

The catalysed reaction is L-glutaminyl-[peptide chain release factor] + S-adenosyl-L-methionine = N(5)-methyl-L-glutaminyl-[peptide chain release factor] + S-adenosyl-L-homocysteine + H(+). Methylates the class 1 translation termination release factors RF1/PrfA and RF2/PrfB on the glutamine residue of the universally conserved GGQ motif. This is Release factor glutamine methyltransferase from Thermosynechococcus vestitus (strain NIES-2133 / IAM M-273 / BP-1).